A 72-amino-acid chain; its full sequence is Prokaryotic ubiquitin-like protein Pup (72 aa).

The span at 1–10 shows a compositional bias: gly residues; the sequence is MATKDTGGGQ. Positions 1 to 45 are disordered; the sequence is MATKDTGGGQQKATRSTEEVEEQAQDAQASEDLKERQEKLSDDVD. Residues 10 to 60 adopt a coiled-coil conformation; the sequence is QQKATRSTEEVEEQAQDAQASEDLKERQEKLSDDVDSVLDEIDDVLEENAE. Residues 28 to 66 form an ARC ATPase binding region; sequence QASEDLKERQEKLSDDVDSVLDEIDDVLEENAEDFVRSF. Residues 31–42 show a composition bias toward basic and acidic residues; the sequence is EDLKERQEKLSD. Glu72 participates in a covalent cross-link: Isoglutamyl lysine isopeptide (Glu-Lys) (interchain with K-? in acceptor proteins).

This sequence belongs to the prokaryotic ubiquitin-like protein family. Strongly interacts with the proteasome-associated ATPase ARC through a hydrophobic interface; the interacting region of Pup lies in its C-terminal half. There is one Pup binding site per ARC hexamer ring.

It participates in protein degradation; proteasomal Pup-dependent pathway. Protein modifier that is covalently attached to lysine residues of substrate proteins, thereby targeting them for proteasomal degradation. The tagging system is termed pupylation. This chain is Prokaryotic ubiquitin-like protein Pup, found in Streptomyces coelicolor (strain ATCC BAA-471 / A3(2) / M145).